The primary structure comprises 345 residues: Low-density lipoprotein receptor class A domain-containing protein 3 (345 aa).

The signal sequence occupies residues 1-17 (MWLLGPLCLLLSSAAES). Topologically, residues 18 to 173 (QLLPGNNFTN…NQLVYYPSIT (156 aa)) are extracellular. A glycan (N-linked (GlcNAc...) asparagine) is linked at Asn-24. 3 LDL-receptor class A domains span residues 28-65 (ECNI…KECP), 70-107 (KCGP…ENCT), and 112-148 (LCST…ESCE). Disulfide bonds link Cys-29/Cys-42, Cys-37/Cys-55, Cys-49/Cys-64, Cys-71/Cys-84, Cys-78/Cys-97, Cys-91/Cys-106, Cys-113/Cys-125, Cys-120/Cys-138, and Cys-132/Cys-147. The (Microbial infection) Interaction with Venezuelan equine encephalitis virus/VEEV spike proteins E1 and E2 stretch occupies residues 30–57 (NIPGNFMCSNGRCIPGAWQCDGLPDCFD). The helical transmembrane segment at 174-194 (YAIIGSSVIFVLVVALLALVL) threads the bilayer. At 195–345 (HHQRKRNNLM…SEPSQGTEEV (151 aa)) the chain is on the cytoplasmic side. 2 consecutive short sequence motifs (involved in ITCH interaction) follow at residues 256–259 (PPSY) and 275–278 (PPPY). The interval 270–345 (WYDLPPPPYS…SEPSQGTEEV (76 aa)) is disordered. Residues 295 to 313 (SRSGSANSASSQAASSLLS) show a composition bias toward low complexity.

The protein belongs to the LDLR family. As to quaternary structure, interacts with APP precursor C-terminus. Interacts directly with ITCH; this interaction promotes ITCH auto-ubiquitination leading to its degradation. Interacts directly with NEDD4; this interaction promotes NEDD4 auto-ubiquitination. Interacts directly with NEDD4L. (Microbial infection) Interacts (via domain LDL-receptor class A 1) with Venezuelan equine encephalitis virus/VEEV spike proteins E1 and E2. Expressed at high levels in brain, lung, skeletal muscle, and pancreas. Expressed at moderate levels in heart, placenta, and kidney but not detected in the liver.

The protein resides in the cell membrane. Functionally, may influence APP processing, resulting in a decrease in sAPP-alpha production and increased amyloidogenic P3 peptide production. May regulate ITCH and NEDD4 E3 ligase activity and degradation. (Microbial infection) Acts as a receptor for Venezuelan equine encephalitis virus. The protein is Low-density lipoprotein receptor class A domain-containing protein 3 of Homo sapiens (Human).